The primary structure comprises 247 residues: tRNA pseudouridine synthase A (247 aa).

Aspartate 53 functions as the Nucleophile in the catalytic mechanism. Tyrosine 112 is a substrate binding site.

Belongs to the tRNA pseudouridine synthase TruA family. In terms of assembly, homodimer.

The enzyme catalyses uridine(38/39/40) in tRNA = pseudouridine(38/39/40) in tRNA. In terms of biological role, formation of pseudouridine at positions 38, 39 and 40 in the anticodon stem and loop of transfer RNAs. The chain is tRNA pseudouridine synthase A from Anaplasma marginale (strain St. Maries).